The following is a 1176-amino-acid chain: Leucine--tRNA ligase, cytoplasmic (1176 aa).

Residues Tyr52 and Tyr54 each contribute to the L-leucine site. The 'HIGH' region signature appears at 60 to 63 (HLGH). The disordered stretch occupies residues 115 to 142 (PDFPDEEDEEEETNVKTEDTRIKDKAKG). Residues 117–126 (FPDEEDEEEE) are compositionally biased toward acidic residues. The span at 127–139 (TNVKTEDTRIKDK) shows a compositional bias: basic and acidic residues. At Ser167 the chain carries Phosphoserine. The segment at 260-509 (GPQEYTLLKL…DAGDALIYME (250 aa)) is editing domain. L-leucine is bound by residues Leu594 and Ser597. Residues 716 to 720 (KMSKS) carry the 'KMSKS' region motif. Lys719 lines the ATP pocket. Ser720 carries the post-translational modification Phosphoserine. N6-acetyllysine occurs at positions 970 and 1047.

Belongs to the class-I aminoacyl-tRNA synthetase family.

It localises to the cytoplasm. It catalyses the reaction tRNA(Leu) + L-leucine + ATP = L-leucyl-tRNA(Leu) + AMP + diphosphate. The enzyme catalyses L-methionyl-tRNA(Leu) + H2O = tRNA(Leu) + L-methionine + H(+). 5-fluoro-1,3-dihydro-1-hydroxy-1,2-benzoxaborole inhibits LARS1 by forming a covalent adduct with the 3' adenosine of tRNA(Leu) at the editing site, thus locking the enzyme in an inactive conformation. In terms of biological role, aminoacyl-tRNA synthetase that catalyzes the specific attachment of leucine to its cognate tRNA (tRNA(Leu)). It performs tRNA aminoacylation in a two-step reaction: Leu is initially activated by ATP to form a leucyl-adenylate (Leu-AMP) intermediate; then the leucyl moiety is transferred to the acceptor 3' end of the tRNA to yield leucyl-tRNA. To improve the fidelity of catalytic reactions, it is also able to hydrolyze misactivated aminoacyl-adenylate intermediates (pre-transfer editing) and mischarged aminoacyl-tRNAs (post-transfer editing). This Pongo abelii (Sumatran orangutan) protein is Leucine--tRNA ligase, cytoplasmic (LARS1).